We begin with the raw amino-acid sequence, 202 residues long: Adenylyl-sulfate kinase (202 aa).

35–42 (GLSGSGKS) is a binding site for ATP. Residue Ser-109 is the Phosphoserine intermediate of the active site.

It belongs to the APS kinase family.

The enzyme catalyses adenosine 5'-phosphosulfate + ATP = 3'-phosphoadenylyl sulfate + ADP + H(+). It functions in the pathway sulfur metabolism; hydrogen sulfide biosynthesis; sulfite from sulfate: step 2/3. Functionally, catalyzes the synthesis of activated sulfate. The sequence is that of Adenylyl-sulfate kinase from Bacteroides fragilis (strain YCH46).